The sequence spans 347 residues: Isopentenyl-diphosphate delta-isomerase (347 aa).

A disordered region spans residues 1-31 (MDESNSQFEKRKRDHIRIALDPRSQTDGQNG). The segment covering 8 to 20 (FEKRKRDHIRIAL) has biased composition (basic and acidic residues). 11-12 (RK) lines the substrate pocket. Residues serine 72, 73-75 (SMT), serine 103, and asparagine 132 each bind FMN. Residue 103-105 (SQR) coordinates substrate. Residue glutamine 166 coordinates substrate. Glutamate 167 is a binding site for Mg(2+). FMN contacts are provided by residues lysine 198, serine 223, threonine 228, 279 to 281 (GVR), and 300 to 301 (AK).

This sequence belongs to the IPP isomerase type 2 family. Homooctamer. Dimer of tetramers. FMN is required as a cofactor. Requires NADPH as cofactor. It depends on Mg(2+) as a cofactor.

The protein localises to the cytoplasm. The catalysed reaction is isopentenyl diphosphate = dimethylallyl diphosphate. Its function is as follows. Involved in the biosynthesis of isoprenoids. Catalyzes the 1,3-allylic rearrangement of the homoallylic substrate isopentenyl (IPP) to its allylic isomer, dimethylallyl diphosphate (DMAPP). The polypeptide is Isopentenyl-diphosphate delta-isomerase (Bdellovibrio bacteriovorus (strain ATCC 15356 / DSM 50701 / NCIMB 9529 / HD100)).